The primary structure comprises 207 residues: MQIGLDFNLVEDLVAGVDEVGRGPLCGAVVTAAVILDPARPILGLNDSKKLTEAKREALFDEICAKALSFCIARAEVEEIDRLNILQATMLAMQRAVEGLSVTPKLALIDGNRCPKLSVPAAPVIKGDSQVPAIAAASILAKVTRDREMSAFELIYPGYGMGGHKGYPTPVHLEALARLGPTPIHRRSFAPVRAAWEAREGITDSLI.

Positions 12–201 (DLVAGVDEVG…VRAAWEAREG (190 aa)) constitute an RNase H type-2 domain. Residues aspartate 18, glutamate 19, and aspartate 110 each contribute to the a divalent metal cation site.

The protein belongs to the RNase HII family. The cofactor is Mn(2+). Mg(2+) is required as a cofactor.

It localises to the cytoplasm. The enzyme catalyses Endonucleolytic cleavage to 5'-phosphomonoester.. Functionally, endonuclease that specifically degrades the RNA of RNA-DNA hybrids. The polypeptide is Ribonuclease HII (Pseudomonas putida (strain W619)).